A 406-amino-acid chain; its full sequence is Cysteine desulfurase (406 aa).

N6-(pyridoxal phosphate)lysine is present on Lys-226. The Cysteine persulfide intermediate role is filled by Cys-364.

The protein belongs to the class-V pyridoxal-phosphate-dependent aminotransferase family. Csd subfamily. Homodimer. Interacts with SufE and the SufBCD complex composed of SufB, SufC and SufD. The interaction with SufE is required to mediate the direct transfer of the sulfur atom from the S-sulfanylcysteine. Requires pyridoxal 5'-phosphate as cofactor.

The protein localises to the cytoplasm. The catalysed reaction is (sulfur carrier)-H + L-cysteine = (sulfur carrier)-SH + L-alanine. It carries out the reaction L-selenocysteine + AH2 = hydrogenselenide + L-alanine + A + H(+). It participates in cofactor biosynthesis; iron-sulfur cluster biosynthesis. In terms of biological role, cysteine desulfurases mobilize the sulfur from L-cysteine to yield L-alanine, an essential step in sulfur metabolism for biosynthesis of a variety of sulfur-containing biomolecules. Component of the suf operon, which is activated and required under specific conditions such as oxidative stress and iron limitation. Acts as a potent selenocysteine lyase in vitro, that mobilizes selenium from L-selenocysteine. Selenocysteine lyase activity is however unsure in vivo. This Escherichia coli O17:K52:H18 (strain UMN026 / ExPEC) protein is Cysteine desulfurase.